We begin with the raw amino-acid sequence, 213 residues long: Glycerol-3-phosphate acyltransferase (213 aa).

A run of 6 helical transmembrane segments spans residues 4–24 (IILLLIASYLLGAIPFGLWIG), 48–68 (ILGVKAGISVFAFDLLKGTLA), 71–91 (LPLFFHINGVSPLIFGLLAVI), 113–133 (VILGFSPLFLIYLLVVFIIVL), 144–164 (VIGAVFALLGILIFPSIGFIL), and 165–185 (TSYDLLFSIIIFVLAIIIILR).

Belongs to the PlsY family. As to quaternary structure, probably interacts with PlsX.

The protein resides in the cell membrane. It catalyses the reaction an acyl phosphate + sn-glycerol 3-phosphate = a 1-acyl-sn-glycero-3-phosphate + phosphate. The protein operates within lipid metabolism; phospholipid metabolism. In terms of biological role, catalyzes the transfer of an acyl group from acyl-phosphate (acyl-PO(4)) to glycerol-3-phosphate (G3P) to form lysophosphatidic acid (LPA). This enzyme utilizes acyl-phosphate as fatty acyl donor, but not acyl-CoA or acyl-ACP. In Lactococcus lactis subsp. lactis (strain IL1403) (Streptococcus lactis), this protein is Glycerol-3-phosphate acyltransferase.